The chain runs to 313 residues: Porphobilinogen deaminase (313 aa).

C242 bears the S-(dipyrrolylmethanemethyl)cysteine mark.

Belongs to the HMBS family. In terms of assembly, monomer. The cofactor is dipyrromethane.

The catalysed reaction is 4 porphobilinogen + H2O = hydroxymethylbilane + 4 NH4(+). The protein operates within porphyrin-containing compound metabolism; protoporphyrin-IX biosynthesis; coproporphyrinogen-III from 5-aminolevulinate: step 2/4. In terms of biological role, tetrapolymerization of the monopyrrole PBG into the hydroxymethylbilane pre-uroporphyrinogen in several discrete steps. The protein is Porphobilinogen deaminase of Pseudomonas fluorescens (strain Pf0-1).